Here is a 353-residue protein sequence, read N- to C-terminus: MTATLERRESANLWGRFCEFITSTENRLYIGWFGVIMIPCLLTAISVYIIAFVAAPPVDIDGIREPVSGSLLYGNNIISGSVIPMSNAIGLHFYPIWEAASLDEWLYNGGPYLMVVCHFLLGIACYMGREWELSFRLGMRPWIAVAYSAPVAAATAVFLIYPIGQGSFSDGMPLGISGTFNFMIVFQAEHNILMHPFHMLGVAGVFGGSLFSAMHGSLVTSSLIRETTENESANAGYKFGQEEETYNIVAAHGYFGRLIFQYASFNNSRSLHFFLAVWPVVGIWFTAMGISTMAFNLNGFNFNQSVVDSQGRVINTWADIINRANLGMEVMHERNAHNFPLDLASVEAPAVNG.

Thr-2 is subject to N-acetylthreonine. Thr-2 is subject to Phosphothreonine. The next 3 membrane-spanning stretches (helical) occupy residues 29–46 (YIGWFGVIMIPCLLTAIS), 118–133 (HFLLGIACYMGREWEL), and 142–156 (WIAVAYSAPVAAATA). A chlorophyll a-binding site is contributed by His-118. Tyr-126 contributes to the pheophytin a binding site. The [CaMn4O5] cluster site is built by Asp-170 and Glu-189. The helical transmembrane segment at 197 to 218 (FHMLGVAGVFGGSLFSAMHGSL) threads the bilayer. His-198 contributes to the chlorophyll a binding site. A quinone is bound by residues His-215 and 264–265 (SF). Position 215 (His-215) interacts with Fe cation. His-272 provides a ligand contact to Fe cation. The helical transmembrane segment at 274 to 288 (FLAVWPVVGIWFTAM) threads the bilayer. [CaMn4O5] cluster-binding residues include His-332, Glu-333, Asp-342, and Ala-344. Residues 345 to 353 (SVEAPAVNG) constitute a propeptide that is removed on maturation.

The protein belongs to the reaction center PufL/M/PsbA/D family. PSII is composed of 1 copy each of membrane proteins PsbA, PsbB, PsbC, PsbD, PsbE, PsbF, PsbH, PsbI, PsbJ, PsbK, PsbL, PsbM, PsbT, PsbX, PsbY, PsbZ, Psb30/Ycf12, at least 3 peripheral proteins of the oxygen-evolving complex and a large number of cofactors. It forms dimeric complexes. The D1/D2 heterodimer binds P680, chlorophylls that are the primary electron donor of PSII, and subsequent electron acceptors. It shares a non-heme iron and each subunit binds pheophytin, quinone, additional chlorophylls, carotenoids and lipids. D1 provides most of the ligands for the Mn4-Ca-O5 cluster of the oxygen-evolving complex (OEC). There is also a Cl(-1) ion associated with D1 and D2, which is required for oxygen evolution. The PSII complex binds additional chlorophylls, carotenoids and specific lipids. serves as cofactor. In terms of processing, tyr-161 forms a radical intermediate that is referred to as redox-active TyrZ, YZ or Y-Z. C-terminally processed by CTPA; processing is essential to allow assembly of the oxygen-evolving complex and thus photosynthetic growth.

The protein resides in the plastid. The protein localises to the chloroplast thylakoid membrane. It catalyses the reaction 2 a plastoquinone + 4 hnu + 2 H2O = 2 a plastoquinol + O2. Functionally, photosystem II (PSII) is a light-driven water:plastoquinone oxidoreductase that uses light energy to abstract electrons from H(2)O, generating O(2) and a proton gradient subsequently used for ATP formation. It consists of a core antenna complex that captures photons, and an electron transfer chain that converts photonic excitation into a charge separation. The D1/D2 (PsbA/PsbD) reaction center heterodimer binds P680, the primary electron donor of PSII as well as several subsequent electron acceptors. The polypeptide is Photosystem II protein D1 (Mesostigma viride (Green alga)).